The chain runs to 199 residues: Holliday junction branch migration complex subunit RuvA (199 aa).

The segment at 1 to 65 (MIGWLHGQII…EDALLLYGFL (65 aa)) is domain I. Residues 66-144 (DKEERSLFRS…QFDGSVSDTF (79 aa)) form a domain II region. Positions 144–148 (FQKQA) are flexible linker. A domain III region spans residues 149–199 (GSTHSQQEAISALEALGYKPQEAWKVMNKIDNGNKSCEQLIREALQILSSR).

It belongs to the RuvA family. Homotetramer. Forms an RuvA(8)-RuvB(12)-Holliday junction (HJ) complex. HJ DNA is sandwiched between 2 RuvA tetramers; dsDNA enters through RuvA and exits via RuvB. An RuvB hexamer assembles on each DNA strand where it exits the tetramer. Each RuvB hexamer is contacted by two RuvA subunits (via domain III) on 2 adjacent RuvB subunits; this complex drives branch migration. In the full resolvosome a probable DNA-RuvA(4)-RuvB(12)-RuvC(2) complex forms which resolves the HJ.

The protein resides in the cytoplasm. Functionally, the RuvA-RuvB-RuvC complex processes Holliday junction (HJ) DNA during genetic recombination and DNA repair, while the RuvA-RuvB complex plays an important role in the rescue of blocked DNA replication forks via replication fork reversal (RFR). RuvA specifically binds to HJ cruciform DNA, conferring on it an open structure. The RuvB hexamer acts as an ATP-dependent pump, pulling dsDNA into and through the RuvAB complex. HJ branch migration allows RuvC to scan DNA until it finds its consensus sequence, where it cleaves and resolves the cruciform DNA. This Legionella pneumophila subsp. pneumophila (strain Philadelphia 1 / ATCC 33152 / DSM 7513) protein is Holliday junction branch migration complex subunit RuvA.